The following is an 81-amino-acid chain: ATP synthase subunit C, plastid (81 aa).

A run of 2 helical transmembrane segments spans residues 3-23 and 57-77; these read PIISAASVIAAGFAVGLASIG and LAFMEALTIYGLVVALALLFA.

The protein belongs to the ATPase C chain family. As to quaternary structure, F-type ATPases have 2 components, F(1) - the catalytic core - and F(0) - the membrane proton channel. F(1) has five subunits: alpha(3), beta(3), gamma(1), delta(1), epsilon(1). F(0) has four main subunits: a(1), b(1), b'(1) and c(10-14). The alpha and beta chains form an alternating ring which encloses part of the gamma chain. F(1) is attached to F(0) by a central stalk formed by the gamma and epsilon chains, while a peripheral stalk is formed by the delta, b and b' chains.

Its subcellular location is the plastid membrane. Functionally, f(1)F(0) ATP synthase produces ATP from ADP in the presence of a proton or sodium gradient. F-type ATPases consist of two structural domains, F(1) containing the extramembraneous catalytic core and F(0) containing the membrane proton channel, linked together by a central stalk and a peripheral stalk. During catalysis, ATP synthesis in the catalytic domain of F(1) is coupled via a rotary mechanism of the central stalk subunits to proton translocation. Key component of the F(0) channel; it plays a direct role in translocation across the membrane. A homomeric c-ring of between 10-14 subunits forms the central stalk rotor element with the F(1) delta and epsilon subunits. This is ATP synthase subunit C, plastid from Cuscuta gronovii (Common dodder).